Reading from the N-terminus, the 409-residue chain is Elongation factor Tu, chloroplastic (409 aa).

In terms of domain architecture, tr-type G spans 10-214 (KPHVNIGTIG…AVDEYIPTPE (205 aa)). Positions 19–26 (GHVDHGKT) are G1. A GTP-binding site is contributed by 19–26 (GHVDHGKT). Threonine 26 is a Mg(2+) binding site. The interval 60–64 (GITIN) is G2. A G3 region spans residues 81-84 (DCPG). GTP contacts are provided by residues 81–85 (DCPGH) and 136–139 (NKED). The tract at residues 136 to 139 (NKED) is G4. A G5 region spans residues 174-176 (SAL).

The protein belongs to the TRAFAC class translation factor GTPase superfamily. Classic translation factor GTPase family. EF-Tu/EF-1A subfamily.

The protein resides in the plastid. Its subcellular location is the chloroplast. It catalyses the reaction GTP + H2O = GDP + phosphate + H(+). Functionally, GTP hydrolase that promotes the GTP-dependent binding of aminoacyl-tRNA to the A-site of ribosomes during protein biosynthesis. This is Elongation factor Tu, chloroplastic (tufA) from Phaeodactylum tricornutum (strain CCAP 1055/1).